A 232-amino-acid polypeptide reads, in one-letter code: 7-cyano-7-deazaguanine synthase (232 aa).

Position 7–17 (7–17 (LSGGLDSTVVT)) interacts with ATP. Residues Cys195, Cys206, Cys209, and Cys212 each coordinate Zn(2+).

It belongs to the QueC family. It depends on Zn(2+) as a cofactor.

The enzyme catalyses 7-carboxy-7-deazaguanine + NH4(+) + ATP = 7-cyano-7-deazaguanine + ADP + phosphate + H2O + H(+). It participates in purine metabolism; 7-cyano-7-deazaguanine biosynthesis. Its function is as follows. Catalyzes the ATP-dependent conversion of 7-carboxy-7-deazaguanine (CDG) to 7-cyano-7-deazaguanine (preQ(0)). The protein is 7-cyano-7-deazaguanine synthase of Methanocaldococcus jannaschii (strain ATCC 43067 / DSM 2661 / JAL-1 / JCM 10045 / NBRC 100440) (Methanococcus jannaschii).